The sequence spans 189 residues: Glucose-6-phosphate isomerase (189 aa).

Fe cation-binding residues include H88, H90, E97, and H136.

The protein belongs to the archaeal-type GPI family. Homodimer.

It localises to the cytoplasm. It carries out the reaction alpha-D-glucose 6-phosphate = beta-D-fructose 6-phosphate. It functions in the pathway carbohydrate degradation; glycolysis; D-glyceraldehyde 3-phosphate and glycerone phosphate from D-glucose: step 2/4. This is Glucose-6-phosphate isomerase from Thermococcus kodakarensis (strain ATCC BAA-918 / JCM 12380 / KOD1) (Pyrococcus kodakaraensis (strain KOD1)).